Reading from the N-terminus, the 1207-residue chain is Brassinosteroid LRR receptor kinase (1207 aa).

Residues 1–34 (MKAHKTVFNQHPLSLNKLFFVLLLIFFLPPASPA) form the signal peptide. The Cys pair 1 signature appears at 71–78 (CSFTGVSC). 20 LRR repeats span residues 109–131 (NLESLVLKNANLSGSLTSAAKSQ), 135–157 (TLDSIDLAENTISGPISDISSFG), 161–181 (NLKSLNLSKNFLDPPGKEMLK), 186–207 (SLQVLDLSYNNISGFNLFPWVS), 213–234 (ELEFFSLKGNKLAGSIPELDFK), 235–257 (NLSYLDLSANNFSTVFPSFKDCS), 258–280 (NLQHLDLSSNKFYGDIGSSLSSC), 282–304 (KLSFLNLTNNQFVGLVPKLPSES), 305–325 (LQYLYLRGNDFQGVYPNQLAD), 329–350 (TVVELDLSYNNFSGMVPESLGE), 353–374 (SLELVDISYNNFSGKLPVDTLS), 378–400 (NIKTMVLSFNKFVGGLPDSFSNL), 402–423 (KLETLDMSSNNLTGVIPSGICK), 428–450 (NLKVLYLQNNLFKGPIPDSLSNC), 452–474 (QLVSLDLSFNYLTGSIPSSLGSL), 476–499 (KLKDLILWLNQLSGEIPQELMYLQ), 500–523 (ALENLILDFNDLTGPIPASLSNCT), 524–547 (KLNWISLSNNQLSGEIPASLGRLS), 548–570 (NLAILKLGNNSISGNIPAELGNC), and 572–594 (SLIWLDLNTNFLNGSIPPPLFKQ). A glycan (N-linked (GlcNAc...) asparagine) is linked at N119. N-linked (GlcNAc...) asparagine glycosylation is found at N166 and N196. N-linked (GlcNAc...) asparagine glycans are attached at residues N235 and N245. N287 is a glycosylation site (N-linked (GlcNAc...) asparagine). N-linked (GlcNAc...) asparagine glycosylation is found at N339 and N363. N412 and N449 each carry an N-linked (GlcNAc...) asparagine glycan. N-linked (GlcNAc...) asparagine glycosylation is present at N521. Residues N556, N584, N646, and N662 are each glycosylated (N-linked (GlcNAc...) asparagine). LRR repeat units lie at residues 664–686 (SMIFLDLSYNKLEGSIPKELGAM), 688–711 (YLSILNLGHNDLSGMIPQQLGGLK), 712–735 (NVAILDLSYNRFNGTIPNSLTSLT), and 736–758 (LLGEIDLSNNNLSGMIPESAPFD). Residues N724, N746, and N767 are each glycosylated (N-linked (GlcNAc...) asparagine). The Cys pair 2 motif lies at 771–779 (CGYPLPIPC). The helical transmembrane segment at 803-823 (SVAMGLLFSLFCIFGLIIVAI) threads the bilayer. Residues 888–1163 (FHNDSLVGSG…IQVMAMFKEI (276 aa)) form the Protein kinase domain. Residues 894 to 902 (VGSGGFGDV) and K916 each bind ATP. The active-site Proton acceptor is D1014.

This sequence belongs to the protein kinase superfamily. Ser/Thr protein kinase family.

The protein resides in the cell membrane. The catalysed reaction is L-seryl-[protein] + ATP = O-phospho-L-seryl-[protein] + ADP + H(+). It carries out the reaction L-threonyl-[protein] + ATP = O-phospho-L-threonyl-[protein] + ADP + H(+). Its function is as follows. Receptor with a serine/threonine-protein kinase activity. Regulates, in response to brassinosteroid binding, a signaling cascade involved in plant development, including expression of light- and stress-regulated genes, promotion of cell elongation, normal leaf and chloroplast senescence, and flowering. May be involved in a feedback regulation of brassinosteroid biosynthesis. May be also involved in the perception of systemin, a peptide hormone responsible for the systemic activation of defense genes in leaves of wounded plants. The polypeptide is Brassinosteroid LRR receptor kinase (CURL3) (Solanum lycopersicum (Tomato)).